Consider the following 377-residue polypeptide: Guanine nucleotide-binding protein subunit alpha-13 (377 aa).

2 S-palmitoyl cysteine lipidation sites follow: C14 and C18. Residues 47-377 enclose the G-alpha domain; sequence RLVKILLLGA…HDNLKQLMLQ (331 aa). A G1 motif region spans residues 50-63; the sequence is KILLLGAGESGKST. GTP contacts are provided by residues 58–63, S173, and 197–200; these read ESGKST and LLAR. S62 lines the Mg(2+) pocket. The interval 195–203 is G2 motif; it reads DILLARRPT. T203 provides a ligand contact to Mg(2+). T203 is subject to Phosphothreonine; by PKA. Positions 218-227 are G3 motif; it reads FKMVDVGGQR. Residues 287-294 are G4 motif; sequence ILFLNKTD. GTP is bound by residues 291-294 and A349; that span reads NKTD. Positions 347–352 are G5 motif; that stretch reads TTAINT.

It belongs to the G-alpha family. G(12) subfamily. In terms of assembly, g proteins are composed of 3 units; alpha, beta and gamma. The alpha chain contains the guanine nucleotide binding site. Interacts with UBXD5. Interacts with HAX1. Interacts (in GTP-bound form) with PPP5C (via TPR repeats); activates PPP5C phosphatase activity and translocates PPP5C to the cell membrane. Interacts with RGS22. Interacts (in GTP-bound form) with ARHGEF1. Interacts (in GTP-bound form) with ARHGEF11 (via RGS domain). Interacts (in GTP-bound form) with ARHGEF12 (via RGS domain). Interacts with CTNND1. Interacts with GASL2L2. Interacts with GPR35. Interacts with GPR174. In terms of processing, palmitoylation is critical for proper membrane localization and signaling. Post-translationally, phosphorylation on Thr-203 by PKA destabilizes the heterotrimer of alpha, beta and gamma, and inhibits Rho activation. In terms of tissue distribution, expressed in testis, including in Leydig cells and in the seminiferous epithelium, in differentiating cells from the spermatogonia to mature spermatozoa stages and round spermatids (at protein level). Expressed in 99.2% of spermatozoa from healthy individuals, but only in 28.6% of macrocephalic spermatozoa from infertile patients (at protein level).

The protein resides in the cell membrane. The protein localises to the melanosome. Its subcellular location is the cytoplasm. It localises to the nucleus. Its function is as follows. Guanine nucleotide-binding proteins (G proteins) are involved as modulators or transducers in various transmembrane signaling systems. Activates effector molecule RhoA by binding and activating RhoGEFs (ARHGEF1/p115RhoGEF, ARHGEF11/PDZ-RhoGEF and ARHGEF12/LARG). GNA13-dependent Rho signaling subsequently regulates transcription factor AP-1 (activating protein-1). Promotes tumor cell invasion and metastasis by activating RhoA/ROCK signaling pathway. Inhibits CDH1-mediated cell adhesion in a process independent from Rho activation. In lymphoid follicles, transmits P2RY8- and S1PR2-dependent signals that lead to inhibition of germinal center (GC) B cell growth and migration outside the GC niche. The chain is Guanine nucleotide-binding protein subunit alpha-13 (GNA13) from Homo sapiens (Human).